Consider the following 938-residue polypeptide: LPS-assembly protein LptD (938 aa).

The N-terminal stretch at 1 to 33 (MAVKHPAFRKKFPLLVTGSLLALQPAFSLQSFA) is a signal peptide. The disordered stretch occupies residues 52 to 96 (KTATSALPPRPQHSRSAVSTTSGSATATATKQEPAPVLVTESKGR). Low complexity predominate over residues 65–81 (SRSAVSTTSGSATATAT).

It belongs to the LptD family. As to quaternary structure, component of the lipopolysaccharide transport and assembly complex. Interacts with LptE and LptA.

Its subcellular location is the cell outer membrane. Its function is as follows. Together with LptE, is involved in the assembly of lipopolysaccharide (LPS) at the surface of the outer membrane. The chain is LPS-assembly protein LptD from Ectopseudomonas mendocina (strain ymp) (Pseudomonas mendocina).